A 316-amino-acid chain; its full sequence is 4-hydroxy-3-methylbut-2-enyl diphosphate reductase (316 aa).

Cysteine 12 is a [4Fe-4S] cluster binding site. (2E)-4-hydroxy-3-methylbut-2-enyl diphosphate-binding residues include histidine 41 and histidine 74. Histidine 41 and histidine 74 together coordinate dimethylallyl diphosphate. Positions 41 and 74 each coordinate isopentenyl diphosphate. Cysteine 96 contacts [4Fe-4S] cluster. Position 124 (histidine 124) interacts with (2E)-4-hydroxy-3-methylbut-2-enyl diphosphate. Histidine 124 lines the dimethylallyl diphosphate pocket. An isopentenyl diphosphate-binding site is contributed by histidine 124. Glutamate 126 serves as the catalytic Proton donor. Residue threonine 167 participates in (2E)-4-hydroxy-3-methylbut-2-enyl diphosphate binding. Cysteine 197 is a [4Fe-4S] cluster binding site. Residues serine 225, serine 226, asparagine 227, and serine 269 each coordinate (2E)-4-hydroxy-3-methylbut-2-enyl diphosphate. The dimethylallyl diphosphate site is built by serine 225, serine 226, asparagine 227, and serine 269. Positions 225, 226, 227, and 269 each coordinate isopentenyl diphosphate.

This sequence belongs to the IspH family. In terms of assembly, homodimer. [4Fe-4S] cluster is required as a cofactor.

The catalysed reaction is isopentenyl diphosphate + 2 oxidized [2Fe-2S]-[ferredoxin] + H2O = (2E)-4-hydroxy-3-methylbut-2-enyl diphosphate + 2 reduced [2Fe-2S]-[ferredoxin] + 2 H(+). It carries out the reaction dimethylallyl diphosphate + 2 oxidized [2Fe-2S]-[ferredoxin] + H2O = (2E)-4-hydroxy-3-methylbut-2-enyl diphosphate + 2 reduced [2Fe-2S]-[ferredoxin] + 2 H(+). The protein operates within isoprenoid biosynthesis; dimethylallyl diphosphate biosynthesis; dimethylallyl diphosphate from (2E)-4-hydroxy-3-methylbutenyl diphosphate: step 1/1. It functions in the pathway isoprenoid biosynthesis; isopentenyl diphosphate biosynthesis via DXP pathway; isopentenyl diphosphate from 1-deoxy-D-xylulose 5-phosphate: step 6/6. Functionally, catalyzes the conversion of 1-hydroxy-2-methyl-2-(E)-butenyl 4-diphosphate (HMBPP) into a mixture of isopentenyl diphosphate (IPP) and dimethylallyl diphosphate (DMAPP). Acts in the terminal step of the DOXP/MEP pathway for isoprenoid precursor biosynthesis. The protein is 4-hydroxy-3-methylbut-2-enyl diphosphate reductase of Salmonella typhi.